A 156-amino-acid polypeptide reads, in one-letter code: MNIIEANVATPDARVAITIARFNNFINDSLLEGAIDALKRIGQVKDENITIVWVPGAYELPLAAGALAKTGKYDAVIALGTVIRGGTAHFEYVAGGASNGLAHVAQDSEIPVAFGVLTTESIEQAIERAGTKAGNKGAEAALTALEMINVLKAIKA.

5-amino-6-(D-ribitylamino)uracil is bound by residues F22, A57–E59, and T81–I83. G86–T87 is a (2S)-2-hydroxy-3-oxobutyl phosphate binding site. H89 acts as the Proton donor in catalysis. A 5-amino-6-(D-ribitylamino)uracil-binding site is contributed by F114. R128 provides a ligand contact to (2S)-2-hydroxy-3-oxobutyl phosphate.

Belongs to the DMRL synthase family. Forms an icosahedral capsid composed of 60 subunits, arranged as a dodecamer of pentamers.

The enzyme catalyses (2S)-2-hydroxy-3-oxobutyl phosphate + 5-amino-6-(D-ribitylamino)uracil = 6,7-dimethyl-8-(1-D-ribityl)lumazine + phosphate + 2 H2O + H(+). It participates in cofactor biosynthesis; riboflavin biosynthesis; riboflavin from 2-hydroxy-3-oxobutyl phosphate and 5-amino-6-(D-ribitylamino)uracil: step 1/2. Functionally, catalyzes the formation of 6,7-dimethyl-8-ribityllumazine by condensation of 5-amino-6-(D-ribitylamino)uracil with 3,4-dihydroxy-2-butanone 4-phosphate. This is the penultimate step in the biosynthesis of riboflavin. The sequence is that of 6,7-dimethyl-8-ribityllumazine synthase from Escherichia coli O45:K1 (strain S88 / ExPEC).